The primary structure comprises 371 residues: 3-methyl-D-ornithine--L-lysine ligase (371 aa).

Lysine 18 contacts ATP. Position 19–20 (19–20 (LQ)) interacts with L-lysine. ATP-binding positions include aspartate 39, 57–58 (NI), and 80–81 (EN). Residue glutamate 80 coordinates L-lysine. An ATP-grasp domain is found at 93–277 (EKFSCPVLFD…LIELLFRAFN (185 aa)). Residues lysine 112, lysine 139, serine 146, and 168 to 171 (EEYV) contribute to the ADP site. D-ornithine is bound by residues 177-179 (SLE) and aspartate 233. Glutamate 235, glutamate 247, and aspartate 249 together coordinate Mg(2+). ADP is bound at residue glutamate 247. Residues 251-256 (RFPSQT) and glutamate 310 each bind D-ornithine. Residues serine 254 and glutamate 310 each contribute to the L-lysine site.

It belongs to the PylC family. The cofactor is Mg(2+).

The catalysed reaction is (3R)-3-methyl-D-ornithine + L-lysine + ATP = (3R)-3-methyl-D-ornithyl-N(6)-L-lysine + ADP + phosphate + H(+). It participates in amino-acid biosynthesis; L-pyrrolysine biosynthesis. Is required for the biosynthesis of pyrrolysine. Catalyzes the ATP-dependent ligation between (3R)-3-methyl-D-ornithine and L-lysine, leading to (3R)-3-methyl-D-ornithyl-N6-L-lysine. Is also involved in the synthesis of pyrroline-carboxy-lysine (Pcl), a demethylated form of pyrrolysine that is generated by the pyrrolysine biosynthetic enzymes when the growth media is supplemented with D-ornithine. In Methanosarcina mazei (strain ATCC BAA-159 / DSM 3647 / Goe1 / Go1 / JCM 11833 / OCM 88) (Methanosarcina frisia), this protein is 3-methyl-D-ornithine--L-lysine ligase.